A 592-amino-acid polypeptide reads, in one-letter code: Cyclin-dependent kinase-like 3 (592 aa).

The Protein kinase domain maps to 4 to 286; sequence YETLGKVGEG…SSDLLHHEYF (283 aa). ATP contacts are provided by residues 10–18 and lysine 33; that span reads VGEGSYGTV. The [NKR]KIAxRE signature appears at 44–50; it reads NKIAMRE. Aspartate 125 serves as the catalytic Proton acceptor. At threonine 158 the chain carries Phosphothreonine. Tyrosine 160 is subject to Phosphotyrosine. Residues 368-379 show a composition bias toward basic and acidic residues; it reads GDISEPKKKEYE. 2 disordered regions span residues 368–390 and 459–485; these read GDIS…ANEN and RAKK…PGPI. Polar residues predominate over residues 466–477; sequence SSQSIGQVMPNS.

It belongs to the protein kinase superfamily. CMGC Ser/Thr protein kinase family. CDC2/CDKX subfamily.

Its subcellular location is the cytoplasm. It catalyses the reaction L-seryl-[protein] + ATP = O-phospho-L-seryl-[protein] + ADP + H(+). It carries out the reaction L-threonyl-[protein] + ATP = O-phospho-L-threonyl-[protein] + ADP + H(+). The polypeptide is Cyclin-dependent kinase-like 3 (Homo sapiens (Human)).